Here is a 244-residue protein sequence, read N- to C-terminus: Demethylmenaquinone methyltransferase (244 aa).

S-adenosyl-L-methionine contacts are provided by residues Thr65, Asp86, and 114-115 (DA).

Belongs to the class I-like SAM-binding methyltransferase superfamily. MenG/UbiE family.

The catalysed reaction is a 2-demethylmenaquinol + S-adenosyl-L-methionine = a menaquinol + S-adenosyl-L-homocysteine + H(+). It participates in quinol/quinone metabolism; menaquinone biosynthesis; menaquinol from 1,4-dihydroxy-2-naphthoate: step 2/2. Functionally, methyltransferase required for the conversion of demethylmenaquinol (DMKH2) to menaquinol (MKH2). The sequence is that of Demethylmenaquinone methyltransferase from Lactobacillus johnsonii (strain CNCM I-12250 / La1 / NCC 533).